Reading from the N-terminus, the 377-residue chain is MSDSSHNLLYNKFELPESVKMSPVEGAVGGIDKVARFVADPLEKGMGHTLGSALRRALLIGLEAPAIVSFSMTGVLHEYMAVEGIIEDVTNIVLNLKGSLLKKYPLQDCEGGRCSQKLRATISIDASDLAAAGGQKEVTLGDLLQEGTFEAVNPEHVIFTVTRPMQLEVMLRVAFGRGYSPSERIVLEERGMNEIVLDAAFSPVVLVNYFVEDTRVGQDTDFDRLVLQVETDGRVAPKEAVAFATQILSKHFSVFEKMDEKRIVFEEAISVEKENKDDILHKLVLGINEIELSVRSTNCLSNANIETIGELVIMPEPRLLQFRNFGKKSLCEIKNKLKEMKLELGMDLSQFGVGLDNVKEKMKWYAEKIRSSKNTKG.

Residues 1–259 (MSDSSHNLLY…KHFSVFEKMD (259 aa)) form an alpha N-terminal domain (alpha-NTD) region. The alpha C-terminal domain (alpha-CTD) stretch occupies residues 276-377 (KDDILHKLVL…KIRSSKNTKG (102 aa)).

It belongs to the RNA polymerase alpha chain family. Homodimer. The RNAP catalytic core consists of 2 alpha, 1 beta, 1 beta' and 1 omega subunit. When a sigma factor is associated with the core the holoenzyme is formed, which can initiate transcription.

The catalysed reaction is RNA(n) + a ribonucleoside 5'-triphosphate = RNA(n+1) + diphosphate. Its function is as follows. DNA-dependent RNA polymerase catalyzes the transcription of DNA into RNA using the four ribonucleoside triphosphates as substrates. This Chlamydia trachomatis serovar D (strain ATCC VR-885 / DSM 19411 / UW-3/Cx) protein is DNA-directed RNA polymerase subunit alpha.